The chain runs to 666 residues: tRNA 5-methylaminomethyl-2-thiouridine biosynthesis bifunctional protein MnmC (666 aa).

A tRNA (mnm(5)s(2)U34)-methyltransferase region spans residues 1–253 (MSSPFAPIIT…KRHMLCAYYE (253 aa)). The segment at 283 to 666 (VGGGLAGCFI…FLRKKIIQGP (384 aa)) is FAD-dependent cmnm(5)s(2)U34 oxidoreductase.

It in the N-terminal section; belongs to the methyltransferase superfamily. tRNA (mnm(5)s(2)U34)-methyltransferase family. This sequence in the C-terminal section; belongs to the DAO family. Requires FAD as cofactor.

The protein resides in the cytoplasm. It carries out the reaction 5-aminomethyl-2-thiouridine(34) in tRNA + S-adenosyl-L-methionine = 5-methylaminomethyl-2-thiouridine(34) in tRNA + S-adenosyl-L-homocysteine + H(+). Functionally, catalyzes the last two steps in the biosynthesis of 5-methylaminomethyl-2-thiouridine (mnm(5)s(2)U) at the wobble position (U34) in tRNA. Catalyzes the FAD-dependent demodification of cmnm(5)s(2)U34 to nm(5)s(2)U34, followed by the transfer of a methyl group from S-adenosyl-L-methionine to nm(5)s(2)U34, to form mnm(5)s(2)U34. The protein is tRNA 5-methylaminomethyl-2-thiouridine biosynthesis bifunctional protein MnmC of Legionella pneumophila (strain Corby).